The chain runs to 317 residues: Annexin D2 (317 aa).

N-acetylalanine is present on alanine 2. 4 Annexin repeats span residues 11–82 (PLPE…LWTL), 83–154 (DPPE…PLVS), 166–238 (MLAR…AVIT), and 242–313 (YPEK…ALLG). The Ca(2+) site is built by phenylalanine 24, glycine 26, glycine 28, and glutamate 68. The residue at position 95 (serine 95) is a Phosphoserine. Residues threonine 100 and threonine 112 each carry the phosphothreonine modification. Tyrosine 129 carries the phosphotyrosine modification. The Ca(2+) site is built by isoleucine 255 and glycine 259. Tyrosine 284 carries the phosphotyrosine modification. Phosphoserine is present on serine 289. 3 residues coordinate Ca(2+): aspartate 299, threonine 300, and glutamate 305.

This sequence belongs to the annexin (TC 1.A.31.1) family. As to expression, expressed mainly in roots and flowers. Low in stems and bearly detectable in leaves.

The protein localises to the cytoplasm. It localises to the cytosol. It is found in the membrane. Functionally, may mediate regulated, targeted secretion of Golgi-derived vesicles during seedling development. The protein is Annexin D2 (ANN2) of Arabidopsis thaliana (Mouse-ear cress).